A 232-amino-acid chain; its full sequence is Orotate phosphoribosyltransferase (232 aa).

5-phospho-alpha-D-ribose 1-diphosphate-binding positions include Arg107, Lys108, Lys111, His113, and 133–141 (EDLTTAGGS). Thr137 is a binding site for orotate.

It belongs to the purine/pyrimidine phosphoribosyltransferase family. PyrE subfamily. As to quaternary structure, homodimer. Mg(2+) is required as a cofactor.

It carries out the reaction orotidine 5'-phosphate + diphosphate = orotate + 5-phospho-alpha-D-ribose 1-diphosphate. It functions in the pathway pyrimidine metabolism; UMP biosynthesis via de novo pathway; UMP from orotate: step 1/2. Catalyzes the transfer of a ribosyl phosphate group from 5-phosphoribose 1-diphosphate to orotate, leading to the formation of orotidine monophosphate (OMP). The polypeptide is Orotate phosphoribosyltransferase (Rhizobium rhizogenes (strain K84 / ATCC BAA-868) (Agrobacterium radiobacter)).